The following is an 831-amino-acid chain: von Willebrand factor A domain-containing protein DDB_G0285981 (831 aa).

Residues 60-188 enclose the VIT domain; it reads RDTFGLKTFS…NVTIHLTIIS (129 aa). The region spanning 312 to 480 is the VWFA domain; that stretch reads EFIFLIDCSG…NFEEQVMKLV (169 aa).

In Dictyostelium discoideum (Social amoeba), this protein is von Willebrand factor A domain-containing protein DDB_G0285981.